Here is a 354-residue protein sequence, read N- to C-terminus: UPF0283 membrane protein CGSHiGG_02710 (354 aa).

The next 3 membrane-spanning stretches (helical) occupy residues 57–77 (LLKFTALLFGLATVAQSVQWI), 87–107 (IYLAFALVSLIIILLGIKEII), and 211–231 (ESAVIVAISPLAVVDMFFIAW).

The protein belongs to the UPF0283 family.

It is found in the cell inner membrane. The polypeptide is UPF0283 membrane protein CGSHiGG_02710 (Haemophilus influenzae (strain PittGG)).